Reading from the N-terminus, the 159-residue chain is Ribosome-binding factor A (159 aa).

Composition is skewed to basic and acidic residues over residues 118–128 (AADDEVAKARE) and 137–146 (DPYKEPRVAS). A disordered region spans residues 118 to 159 (AADDEVAKARENAQPAGDADPYKEPRVASDEDEASPDVREAD).

Belongs to the RbfA family. Monomer. Binds 30S ribosomal subunits, but not 50S ribosomal subunits or 70S ribosomes.

Its subcellular location is the cytoplasm. Its function is as follows. One of several proteins that assist in the late maturation steps of the functional core of the 30S ribosomal subunit. Associates with free 30S ribosomal subunits (but not with 30S subunits that are part of 70S ribosomes or polysomes). Required for efficient processing of 16S rRNA. May interact with the 5'-terminal helix region of 16S rRNA. The sequence is that of Ribosome-binding factor A from Rhodococcus erythropolis (strain PR4 / NBRC 100887).